Consider the following 144-residue polypeptide: MNVQVINKSKHPLPAYATELSAGMDIRANLSEPITLAPLQRCLVPTGIYIALPQGFEAQVRPRSGLAIKKGITVLNSPGTIDADYRGEVCIILVNLSSEPFVIEDGERIAQMVIARHEQAVWQEVEVLDETERGAGGFGHTGRG.

Residues 63–65 (RSG), N76, and 80–82 (TID) each bind substrate.

It belongs to the dUTPase family. Mg(2+) serves as cofactor.

It catalyses the reaction dUTP + H2O = dUMP + diphosphate + H(+). It functions in the pathway pyrimidine metabolism; dUMP biosynthesis; dUMP from dCTP (dUTP route): step 2/2. Functionally, this enzyme is involved in nucleotide metabolism: it produces dUMP, the immediate precursor of thymidine nucleotides and it decreases the intracellular concentration of dUTP so that uracil cannot be incorporated into DNA. This is Deoxyuridine 5'-triphosphate nucleotidohydrolase from Bacteroides thetaiotaomicron (strain ATCC 29148 / DSM 2079 / JCM 5827 / CCUG 10774 / NCTC 10582 / VPI-5482 / E50).